The chain runs to 244 residues: ATP synthase subunit a, chloroplastic (244 aa).

Helical transmembrane passes span 35–55 (QVLI…AIAV), 92–112 (VPFI…GALL), 131–151 (INTT…AGIT), 196–216 (LVVV…VMFL), and 217–237 (GLFT…AYIG).

Belongs to the ATPase A chain family. In terms of assembly, F-type ATPases have 2 components, CF(1) - the catalytic core - and CF(0) - the membrane proton channel. CF(1) has five subunits: alpha(3), beta(3), gamma(1), delta(1), epsilon(1). CF(0) has four main subunits: a, b, b' and c.

The protein localises to the plastid. The protein resides in the chloroplast thylakoid membrane. In terms of biological role, key component of the proton channel; it plays a direct role in the translocation of protons across the membrane. The polypeptide is ATP synthase subunit a, chloroplastic (Coffea arabica (Arabian coffee)).